The following is a 243-amino-acid chain: Transmembrane protein 176A (243 aa).

Ser42 is subject to Phosphoserine. A run of 4 helical transmembrane segments spans residues 65 to 85 (WVVQ…LYIC), 92 to 112 (TQGA…VAFL), 122 to 142 (ALMR…AIVI), and 204 to 224 (LLGV…VYLW).

This sequence belongs to the TMEM176 family. As to quaternary structure, interacts with MCOLN2.

The protein localises to the membrane. The sequence is that of Transmembrane protein 176A (Tmem176a) from Rattus norvegicus (Rat).